The following is a 474-amino-acid chain: F420-non-reducing hydrogenase vhc subunit A (474 aa).

Ni(2+)-binding residues include cysteine 61, cysteine 64, cysteine 445, and cysteine 448.

Belongs to the [NiFe]/[NiFeSe] hydrogenase large subunit family. The F420-non-reducing hydrogenase vhc is composed of three subunits; VhcA, VhcD and VhcG. Ni(2+) is required as a cofactor.

The chain is F420-non-reducing hydrogenase vhc subunit A (vhcA) from Methanococcus voltae.